We begin with the raw amino-acid sequence, 206 residues long: Ribosomal RNA large subunit methyltransferase E (206 aa).

S-adenosyl-L-methionine contacts are provided by Gly60, Trp62, Asp80, Asp96, and Asp121. Lys161 functions as the Proton acceptor in the catalytic mechanism.

The protein belongs to the class I-like SAM-binding methyltransferase superfamily. RNA methyltransferase RlmE family.

The protein localises to the cytoplasm. The enzyme catalyses uridine(2552) in 23S rRNA + S-adenosyl-L-methionine = 2'-O-methyluridine(2552) in 23S rRNA + S-adenosyl-L-homocysteine + H(+). Its function is as follows. Specifically methylates the uridine in position 2552 of 23S rRNA at the 2'-O position of the ribose in the fully assembled 50S ribosomal subunit. This chain is Ribosomal RNA large subunit methyltransferase E, found in Hahella chejuensis (strain KCTC 2396).